The sequence spans 652 residues: Probable serine/threonine-protein kinase mkcD (652 aa).

3 disordered regions span residues methionine 1–lysine 47, asparagine 163–valine 198, and glutamine 257–proline 289. A compositionally biased stretch (gly residues) spans asparagine 182–aspartate 191. Residues lysine 231 to glutamate 275 adopt a coiled-coil conformation. The segment covering glutamine 257–glutamine 271 has biased composition (low complexity). Residues serine 279 to proline 289 show a composition bias toward polar residues. The Protein kinase domain maps to phenylalanine 369–leucine 626. ATP-binding positions include glutamate 375 to valine 383 and lysine 403. The Proton acceptor role is filled by aspartate 494.

The protein belongs to the protein kinase superfamily. STE Ser/Thr protein kinase family. STE20 subfamily. Mg(2+) serves as cofactor.

It catalyses the reaction L-seryl-[protein] + ATP = O-phospho-L-seryl-[protein] + ADP + H(+). The enzyme catalyses L-threonyl-[protein] + ATP = O-phospho-L-threonyl-[protein] + ADP + H(+). The polypeptide is Probable serine/threonine-protein kinase mkcD (Dictyostelium discoideum (Social amoeba)).